The sequence spans 1342 residues: DNA-directed RNA polymerase subunit beta (1342 aa).

This sequence belongs to the RNA polymerase beta chain family. The RNAP catalytic core consists of 2 alpha, 1 beta, 1 beta' and 1 omega subunit. When a sigma factor is associated with the core the holoenzyme is formed, which can initiate transcription.

It carries out the reaction RNA(n) + a ribonucleoside 5'-triphosphate = RNA(n+1) + diphosphate. In terms of biological role, DNA-dependent RNA polymerase catalyzes the transcription of DNA into RNA using the four ribonucleoside triphosphates as substrates. In Vibrio parahaemolyticus serotype O3:K6 (strain RIMD 2210633), this protein is DNA-directed RNA polymerase subunit beta.